We begin with the raw amino-acid sequence, 90 residues long: Heat shock protein beta-7 (90 aa).

In terms of domain architecture, sHSP spans 39 to 90 (PLTFPARPGGQGNIKTLGDAYEFTVDMRDFSPEDIIVTTSNNHIEVRAEKKP).

It belongs to the small heat shock protein (HSP20) family. In terms of assembly, interacts with C-terminal domain of actin-binding protein 280. As to expression, found in both cardiac and skeletal muscle.

The protein resides in the cytoplasm. Its subcellular location is the nucleus. It is found in the cajal body. The polypeptide is Heat shock protein beta-7 (Hspb7) (Rattus norvegicus (Rat)).